The sequence spans 656 residues: Ankyrin repeat and SAM domain-containing protein 3 (656 aa).

Positions 1 to 422 (MSELSDEASE…AESSPQTQRA (422 aa)) are interaction with NEK7. A phosphoserine mark is found at Ser2 and Ser5. ANK repeat units lie at residues 34 to 64 (DVPLDLHTAASIGQYEVVKECVQRRELDLNK), 68 to 97 (GGWTPLMYASYIGHDTIVHLLLEAGVSVNV), 101 to 130 (EGQTPLMLASSCGNESIAYFLLQQGAELEM), 134 to 163 (QGWTALFHCTSAGHQHMVRFLLDSGANANV), 168 to 197 (CGFTPLMEAAAAGHEIIVQYFLNHGVKVDA), and 201 to 220 (SGATARMLAKQYGHMKIVAL). 3-hydroxyasparagine is present on Asn96. 5 positions are modified to phosphoserine: Ser201, Ser225, Ser243, Ser244, and Ser245. Disordered regions lie at residues 235 to 265 (SPEKYEDLSSSDESCPAPQRQRPCRKKGVSI) and 277 to 312 (GIGLGGRAPRPRYEQAPPRGYVTFNSSGENPLEEEG). At Thr319 the chain carries Phosphothreonine. Residues Ser320, Ser368, Ser371, and Ser375 each carry the phosphoserine modification. Residues 346–425 (GPVQSSSSSE…SPQTQRAPYS (80 aa)) form a disordered region. Positions 425 to 488 (SGPQDLAALL…TSAIARWHSS (64 aa)) constitute an SAM domain. Residues 501–526 (ADRLEAEMQELAIQLHKRCEEVEATR) adopt a coiled-coil conformation. The residue at position 541 (Ser541) is a Phosphoserine.

Homooligomer. Interacts (via SAM domain) with ANKS6 (via SAM domain). Interacts with BICC1. Interacts with NPHP1. Interacts with NEK8. Interacts with HIF1AN. Interacts with NEK7; this interaction alters the subcellular distribution of NEK7 by preventing its nuclear translocation. Hydroxylated at Asn-96, most probably by HIF1AN. In terms of processing, phosphorylations at Ser-5, Ser-225, Thr-319, Ser-320, Ser-368 and Ser-371 occur in a NEK7-dependent manner. Post-translationally, polyubiquitinated.

Its subcellular location is the cell projection. The protein localises to the cilium. The protein resides in the cytoplasm. Functionally, may be involved in vasopressin signaling in the kidney. The sequence is that of Ankyrin repeat and SAM domain-containing protein 3 (ANKS3) from Homo sapiens (Human).